Here is a 229-residue protein sequence, read N- to C-terminus: Potassium/proton antiporter CemA (229 aa).

Helical transmembrane passes span 6–26 (AFIP…ISLC), 107–127 (IFHF…SFWG), 152–172 (FLIL…GWEL), and 189–209 (ILSG…KYWI).

It belongs to the CemA family.

It is found in the plastid. Its subcellular location is the chloroplast inner membrane. The enzyme catalyses K(+)(in) + H(+)(out) = K(+)(out) + H(+)(in). Contributes to K(+)/H(+) antiport activity by supporting proton efflux to control proton extrusion and homeostasis in chloroplasts in a light-dependent manner to modulate photosynthesis. Prevents excessive induction of non-photochemical quenching (NPQ) under continuous-light conditions. Indirectly promotes efficient inorganic carbon uptake into chloroplasts. The polypeptide is Potassium/proton antiporter CemA (Aethionema grandiflorum (Persian stone-cress)).